Reading from the N-terminus, the 394-residue chain is Alanine--glyoxylate aminotransferase (394 aa).

Pyridoxal 5'-phosphate is bound by residues 76 to 78 (AGH), Ser153, and Gln204. Ser153 lines the substrate pocket. An N6-(pyridoxal phosphate)lysine modification is found at Lys205. Residues Tyr256 and Thr259 each coordinate pyridoxal 5'-phosphate. Arg356 is a binding site for substrate.

It belongs to the class-V pyridoxal-phosphate-dependent aminotransferase family. Homodimer. Pyridoxal 5'-phosphate is required as a cofactor.

Its subcellular location is the peroxisome. It carries out the reaction glyoxylate + L-alanine = glycine + pyruvate. The enzyme catalyses (2S)-2-aminobutanoate + glyoxylate = 2-oxobutanoate + glycine. It catalyses the reaction glyoxylate + L-phenylalanine = 3-phenylpyruvate + glycine. The catalysed reaction is glyoxylate + L-serine = 3-hydroxypyruvate + glycine. It carries out the reaction 2-oxobutanoate + L-alanine = (2S)-2-aminobutanoate + pyruvate. The enzyme catalyses L-phenylalanine + pyruvate = 3-phenylpyruvate + L-alanine. It catalyses the reaction L-serine + pyruvate = 3-hydroxypyruvate + L-alanine. Its function is as follows. Catalyzes the pyridoxal 5'-phosphate-dependent transamination of alanine with glyoxylate as an amino group acceptor. Can also catalyze, although with much less efficiency, the transamination of amino-butyrate, phenylalanine and serine with glyoxylate or pyruvate as an amino group acceptor. Does not catalyze the transamination of both 3-hydroxykynurenine and L-kynurenine. May play a role in the detoxification of glyoxylate, a toxic plant metabolite from the fly diet. The chain is Alanine--glyoxylate aminotransferase from Drosophila melanogaster (Fruit fly).